The following is a 311-amino-acid chain: Malate dehydrogenase (311 aa).

NAD(+) contacts are provided by residues Gly7 to Gly13 and Asp34. Substrate contacts are provided by Arg81 and Arg87. Residues Asn94 and Ile117–Asn119 contribute to the NAD(+) site. Substrate-binding residues include Asn119 and Arg153. The active-site Proton acceptor is the His177. Met227 contributes to the NAD(+) binding site.

Belongs to the LDH/MDH superfamily. MDH type 1 family. As to quaternary structure, homodimer.

The catalysed reaction is (S)-malate + NAD(+) = oxaloacetate + NADH + H(+). Functionally, catalyzes the reversible oxidation of malate to oxaloacetate. This chain is Malate dehydrogenase, found in Shewanella sediminis (strain HAW-EB3).